We begin with the raw amino-acid sequence, 169 residues long: Probable NADH dehydrogenase [ubiquinone] 1 alpha subcomplex subunit 5, mitochondrial (169 aa).

The N-terminal 11 residues, 1–11 (MFLRAIGRPLL), are a transit peptide targeting the mitochondrion.

It belongs to the complex I NDUFA5 subunit family. In terms of assembly, complex I is composed of at least 49 different subunits.

It is found in the mitochondrion inner membrane. In terms of biological role, accessory subunit of the mitochondrial membrane respiratory chain NADH dehydrogenase (Complex I), that is believed not to be involved in catalysis. Complex I functions in the transfer of electrons from NADH to the respiratory chain. The immediate electron acceptor for the enzyme is believed to be ubiquinone. The protein is Probable NADH dehydrogenase [ubiquinone] 1 alpha subcomplex subunit 5, mitochondrial of Arabidopsis thaliana (Mouse-ear cress).